We begin with the raw amino-acid sequence, 346 residues long: Protein MelA (346 aa).

2 consecutive VOC domains span residues 12–141 (GIEF…DFEA) and 155–305 (EVDH…IFTK). Fe cation-binding residues include His158, His237, and Glu314.

This sequence belongs to the 4HPPD family. Fe cation is required as a cofactor.

Its subcellular location is the cytoplasm. Its pathway is pigment biosynthesis; melanin biosynthesis. This chain is Protein MelA (melA), found in Shewanella colwelliana (Alteromonas colwelliana).